The chain runs to 447 residues: GTPase Der (447 aa).

EngA-type G domains lie at 4–165 (QIIT…PEEE) and 180–357 (LQIV…KIWN). Residues 10–17 (GRPNVGKS), 57–61 (DTPGL), 119–122 (NKCE), 186–193 (GRPNAGKS), 233–237 (DTAGL), and 298–301 (NKWD) contribute to the GTP site. The region spanning 358 to 443 (KKITTSKLNE…PIRFIYVKTK (86 aa)) is the KH-like domain.

The protein belongs to the TRAFAC class TrmE-Era-EngA-EngB-Septin-like GTPase superfamily. EngA (Der) GTPase family. In terms of assembly, associates with the 50S ribosomal subunit.

Its function is as follows. GTPase that plays an essential role in the late steps of ribosome biogenesis. This chain is GTPase Der, found in Rickettsia africae (strain ESF-5).